A 239-amino-acid chain; its full sequence is Serine protease SplC (239 aa).

A signal peptide spans 1-36 (MNKNIVIKSMAALAILTSVTGINAAVVEETQQIANA). Active-site charge relay system residues include histidine 75, aspartate 113, and serine 193.

The protein belongs to the peptidase S1B family.

The protein localises to the secreted. This is Serine protease SplC (splC) from Staphylococcus aureus (strain USA300 / TCH1516).